Here is a 333-residue protein sequence, read N- to C-terminus: 4-hydroxy-3-methylbut-2-enyl diphosphate reductase (333 aa).

Residue Cys-20 participates in [4Fe-4S] cluster binding. (2E)-4-hydroxy-3-methylbut-2-enyl diphosphate contacts are provided by His-49 and His-85. Dimethylallyl diphosphate contacts are provided by His-49 and His-85. Isopentenyl diphosphate-binding residues include His-49 and His-85. Cys-107 contributes to the [4Fe-4S] cluster binding site. (2E)-4-hydroxy-3-methylbut-2-enyl diphosphate is bound at residue His-135. Residue His-135 participates in dimethylallyl diphosphate binding. An isopentenyl diphosphate-binding site is contributed by His-135. The Proton donor role is filled by Glu-137. Thr-176 is a (2E)-4-hydroxy-3-methylbut-2-enyl diphosphate binding site. Cys-206 is a binding site for [4Fe-4S] cluster. 4 residues coordinate (2E)-4-hydroxy-3-methylbut-2-enyl diphosphate: Ser-234, Ser-235, Asn-236, and Ser-279. Positions 234, 235, 236, and 279 each coordinate dimethylallyl diphosphate. Isopentenyl diphosphate-binding residues include Ser-234, Ser-235, Asn-236, and Ser-279.

The protein belongs to the IspH family. The cofactor is [4Fe-4S] cluster.

It catalyses the reaction isopentenyl diphosphate + 2 oxidized [2Fe-2S]-[ferredoxin] + H2O = (2E)-4-hydroxy-3-methylbut-2-enyl diphosphate + 2 reduced [2Fe-2S]-[ferredoxin] + 2 H(+). The catalysed reaction is dimethylallyl diphosphate + 2 oxidized [2Fe-2S]-[ferredoxin] + H2O = (2E)-4-hydroxy-3-methylbut-2-enyl diphosphate + 2 reduced [2Fe-2S]-[ferredoxin] + 2 H(+). It participates in isoprenoid biosynthesis; dimethylallyl diphosphate biosynthesis; dimethylallyl diphosphate from (2E)-4-hydroxy-3-methylbutenyl diphosphate: step 1/1. It functions in the pathway isoprenoid biosynthesis; isopentenyl diphosphate biosynthesis via DXP pathway; isopentenyl diphosphate from 1-deoxy-D-xylulose 5-phosphate: step 6/6. Catalyzes the conversion of 1-hydroxy-2-methyl-2-(E)-butenyl 4-diphosphate (HMBPP) into a mixture of isopentenyl diphosphate (IPP) and dimethylallyl diphosphate (DMAPP). Acts in the terminal step of the DOXP/MEP pathway for isoprenoid precursor biosynthesis. The protein is 4-hydroxy-3-methylbut-2-enyl diphosphate reductase of Rhizobium johnstonii (strain DSM 114642 / LMG 32736 / 3841) (Rhizobium leguminosarum bv. viciae).